The chain runs to 235 residues: FsC-acetyl coenzyme A-N(2)-transacetylase (235 aa).

Residues 14-190 enclose the N-acetyltransferase domain; that stretch reads LELVPLGHEH…RYSITREEWL (177 aa). CoA-binding positions include 106–108, Gly-114, Asn-146, and 151–153; these read FRV and AVM.

Its pathway is siderophore biosynthesis. Functionally, fsC-acetyl coenzyme A-N(2)-transacetylase; part of the siderophore biosynthetic pathway. Aspergillus fumigatus produces 4 types of siderophores, low-molecular-mass iron chelators, including excreted fusarinine C (FsC) and triacetylfusarinine C (TAFC) for iron uptake and intacellular ferricrocin (FC) for hyphal and hydroxyferricrocin (HFC) for conidial iron distribution and storage. TAFC consists of 3 N(2)-acetyl-N(5)-anhydromevalonyl-N(5)-hydroxyornithine residues cyclically linked by ester bonds; FC is a cyclic hexapeptide with the structure Gly-Ser-Gly-(N(5)-acetyl-N(5)-hydroxyornithine)x3. The biosynthesis of all four siderophores depends on the hydroxylation of ornithine, catalyzed by the monooxygenase sidA. Subsequently, the pathways for biosynthesis of extra- and intracellular siderophores split. For biosynthesis of extracellular siderophores, the transacylase sidF transfers anhydromevalonyl to N(5)-hydroxyornithine. The required anhydromevalonyl-CoA moiety is derived from mevalonate by CoA ligation and dehydration catalyzed by sidI and sidH respectively. The acetylation of N(5)-hydroxyornithine for FC biosynthesis involves the constitutively expressed sidL. FC is hydroxylated to HFC by an as yet uncharacterized enzyme during conidiation. Assembly of fusarinine C (FsC) and FC is catalyzed by two different nonribosomal peptide synthetases (NRPS), sidD and sidC respectively. Subsequently, sidG catalyzes N2-acetylation of FsC for forming TAFC. Both extra- and intracellular siderophores are crucial for growth during iron limitation and virulence. The protein is FsC-acetyl coenzyme A-N(2)-transacetylase of Aspergillus fumigatus (strain ATCC MYA-4609 / CBS 101355 / FGSC A1100 / Af293) (Neosartorya fumigata).